The chain runs to 259 residues: Anti-Pycsar protein Apyc1 (259 aa).

Residues 21 to 233 (YNNSALVTFT…KQQNKIFLMH (213 aa)) are beta-lactamase-like. Histidine 64, histidine 66, aspartate 68, histidine 69, histidine 154, aspartate 178, and histidine 233 together coordinate Zn(2+).

Belongs to the anti-Pycsar protein Apyc1 family. In terms of assembly, homodimer. Requires Zn(2+) as cofactor.

The enzyme catalyses 3',5'-cyclic CMP + H2O = CMP + H(+). It catalyses the reaction 3',5'-cyclic UMP + H2O = UMP + H(+). In terms of biological role, counteracts the host Pycsar antiviral defense system. Phosphodiesterase that enables metal-dependent hydrolysis of host cyclic nucleotide Pycsar defense signals such as cCMP and cUMP. The chain is Anti-Pycsar protein Apyc1 from Bacillus phage vB_BveM-Goe7.